The chain runs to 101 residues: uncharacterized protein (101 aa).

3 consecutive transmembrane segments (helical) span residues 10–32, 45–67, and 77–99; these read FLPNFLLLGAGTALVLCLVFFLY, LGIWGSAVGLLMDTISLWNLPLI, and IAFTIWMVCAYCMYLLIPLILSH.

It is found in the cell membrane. This is an uncharacterized protein from Bacillus subtilis (strain 168).